The sequence spans 433 residues: 3-phosphoshikimate 1-carboxyvinyltransferase (433 aa).

3 residues coordinate 3-phosphoshikimate: lysine 23, serine 24, and arginine 28. Lysine 23 serves as a coordination point for phosphoenolpyruvate. Residues glycine 93 and arginine 121 each coordinate phosphoenolpyruvate. Residues serine 167, glutamine 169, aspartate 318, and lysine 345 each coordinate 3-phosphoshikimate. Glutamine 169 serves as a coordination point for phosphoenolpyruvate. Residue aspartate 318 is the Proton acceptor of the active site. Positions 349 and 390 each coordinate phosphoenolpyruvate.

The protein belongs to the EPSP synthase family. As to quaternary structure, monomer.

It localises to the cytoplasm. It carries out the reaction 3-phosphoshikimate + phosphoenolpyruvate = 5-O-(1-carboxyvinyl)-3-phosphoshikimate + phosphate. The protein operates within metabolic intermediate biosynthesis; chorismate biosynthesis; chorismate from D-erythrose 4-phosphate and phosphoenolpyruvate: step 6/7. Its function is as follows. Catalyzes the transfer of the enolpyruvyl moiety of phosphoenolpyruvate (PEP) to the 5-hydroxyl of shikimate-3-phosphate (S3P) to produce enolpyruvyl shikimate-3-phosphate and inorganic phosphate. This Nitratiruptor sp. (strain SB155-2) protein is 3-phosphoshikimate 1-carboxyvinyltransferase.